The following is a 524-amino-acid chain: Solute carrier family 40 member 1 (524 aa).

Basic and acidic residues predominate over residues 1 to 18 (MENETELRVVHQEEQQRE). The disordered stretch occupies residues 1–30 (MENETELRVVHQEEQQREEGEDESQPQNPP). 11 helical membrane-spanning segments follow: residues 70–92 (SLLL…GPIV), 109–129 (LLFQ…LLLV), 137–157 (LPVF…GVLS), 191–211 (GIDL…ISFV), 218–238 (ITFA…FISV), 314–334 (VVLP…FGTL), 347–367 (YIIG…TLVY), 380–400 (GLWS…SIWV), 409–429 (MLMA…LAVI), 446–466 (GVQN…GIIV), and 472–492 (FWIL…LYTI).

It belongs to the ferroportin (FP) (TC 2.A.100) family. SLC40A subfamily.

It localises to the membrane. Functionally, may be involved in iron transport and iron homeostasis. The protein is Solute carrier family 40 member 1 (IREG1) of Arabidopsis thaliana (Mouse-ear cress).